We begin with the raw amino-acid sequence, 189 residues long: Probable nicotinate-nucleotide adenylyltransferase (189 aa).

It belongs to the NadD family.

The enzyme catalyses nicotinate beta-D-ribonucleotide + ATP + H(+) = deamido-NAD(+) + diphosphate. Its pathway is cofactor biosynthesis; NAD(+) biosynthesis; deamido-NAD(+) from nicotinate D-ribonucleotide: step 1/1. In terms of biological role, catalyzes the reversible adenylation of nicotinate mononucleotide (NaMN) to nicotinic acid adenine dinucleotide (NaAD). The polypeptide is Probable nicotinate-nucleotide adenylyltransferase (Bacillus pumilus (strain SAFR-032)).